The chain runs to 139 residues: Aspartate 1-decarboxylase (139 aa).

Residue S26 is the Schiff-base intermediate with substrate; via pyruvic acid of the active site. At S26 the chain carries Pyruvic acid (Ser). T58 serves as a coordination point for substrate. Y59 acts as the Proton donor in catalysis. 72 to 74 provides a ligand contact to substrate; sequence GGA.

This sequence belongs to the PanD family. In terms of assembly, heterooctamer of four alpha and four beta subunits. Requires pyruvate as cofactor. In terms of processing, is synthesized initially as an inactive proenzyme, which is activated by self-cleavage at a specific serine bond to produce a beta-subunit with a hydroxyl group at its C-terminus and an alpha-subunit with a pyruvoyl group at its N-terminus.

It localises to the cytoplasm. It carries out the reaction L-aspartate + H(+) = beta-alanine + CO2. It participates in cofactor biosynthesis; (R)-pantothenate biosynthesis; beta-alanine from L-aspartate: step 1/1. Functionally, catalyzes the pyruvoyl-dependent decarboxylation of aspartate to produce beta-alanine. This is Aspartate 1-decarboxylase from Microcystis aeruginosa (strain NIES-843 / IAM M-2473).